Consider the following 153-residue polypeptide: MIKVGICDTTFARYDMGGAAIDEIKKHATGIKIIRRTVPGIKDLPVACKKLIEEEGCEMVMALGMPGPEEKDKVCAHEASTGLIQAQLMTNTHILEVFVHEDEEDDPEDLKVLADNRAREHAQNLIMMLFRPERLTRDAGMGMREGKPDVGPL.

The protein belongs to the DMRL synthase family. Homooligomer. Requires Mg(2+) as cofactor.

The enzyme catalyses 2 6,7-dimethyl-8-(1-D-ribityl)lumazine + H(+) = 5-amino-6-(D-ribitylamino)uracil + riboflavin. Its pathway is cofactor biosynthesis; riboflavin biosynthesis; riboflavin from 2-hydroxy-3-oxobutyl phosphate and 5-amino-6-(D-ribitylamino)uracil: step 2/2. Its activity is regulated as follows. Inhibited by EDTA. The relatively low activity of this enzyme suggested that 6,7-dimethyl-8-ribityllumazine might not be its natural substrate. The sequence is that of Riboflavin synthase (ribC) from Methanothermobacter marburgensis (strain ATCC BAA-927 / DSM 2133 / JCM 14651 / NBRC 100331 / OCM 82 / Marburg) (Methanobacterium thermoautotrophicum).